The following is a 342-amino-acid chain: L-threonine 3-dehydrogenase (342 aa).

Residue cysteine 38 coordinates Zn(2+). Catalysis depends on charge relay system residues threonine 40 and histidine 43. Zn(2+) is bound by residues histidine 63, glutamate 64, cysteine 93, cysteine 96, cysteine 99, and cysteine 107. NAD(+) contacts are provided by residues isoleucine 175, aspartate 195, arginine 200, leucine 262–leucine 264, and isoleucine 286–tyrosine 287.

This sequence belongs to the zinc-containing alcohol dehydrogenase family. Homotetramer. Zn(2+) serves as cofactor.

It is found in the cytoplasm. The enzyme catalyses L-threonine + NAD(+) = (2S)-2-amino-3-oxobutanoate + NADH + H(+). It functions in the pathway amino-acid degradation; L-threonine degradation via oxydo-reductase pathway; glycine from L-threonine: step 1/2. Its function is as follows. Catalyzes the NAD(+)-dependent oxidation of L-threonine to 2-amino-3-ketobutyrate. This is L-threonine 3-dehydrogenase from Streptomyces coelicolor (strain ATCC BAA-471 / A3(2) / M145).